The primary structure comprises 382 residues: Mannitol-1-phosphate 5-dehydrogenase (382 aa).

Residue 3 to 14 (ALHFGAGNIGRG) participates in NAD(+) binding.

Belongs to the mannitol dehydrogenase family.

The catalysed reaction is D-mannitol 1-phosphate + NAD(+) = beta-D-fructose 6-phosphate + NADH + H(+). The sequence is that of Mannitol-1-phosphate 5-dehydrogenase from Salmonella schwarzengrund (strain CVM19633).